The primary structure comprises 285 residues: Eukaryotic translation initiation factor 3 subunit J (285 aa).

Disordered stretches follow at residues 1 to 86 and 232 to 285; these read MSWD…QLDE and QARL…DDFM. A compositionally biased stretch (acidic residues) spans 22-41; the sequence is WEDEEDDGPVLESWDVDPEE. Positions 36-81 form a coiled coil; the sequence is DVDPEEEEKKKKEAKLQEAKRKAELKAKEDAEKAKKDAKRKELEQF. Residues 42–86 show a composition bias toward basic and acidic residues; it reads EEKKKKEAKLQEAKRKAELKAKEDAEKAKKDAKRKELEQFDQLDE. The segment covering 269 to 285 has biased composition (acidic residues); it reads DDMDDGQFDDLDDDDFM.

It belongs to the eIF-3 subunit J family. Component of the eukaryotic translation initiation factor 3 (eIF-3) complex.

The protein localises to the cytoplasm. Its function is as follows. Component of the eukaryotic translation initiation factor 3 (eIF-3) complex, which is involved in protein synthesis of a specialized repertoire of mRNAs and, together with other initiation factors, stimulates binding of mRNA and methionyl-tRNAi to the 40S ribosome. The eIF-3 complex specifically targets and initiates translation of a subset of mRNAs involved in cell proliferation. The polypeptide is Eukaryotic translation initiation factor 3 subunit J (Candida albicans (strain SC5314 / ATCC MYA-2876) (Yeast)).